The chain runs to 873 residues: DNA helicase/primase complex-associated protein (873 aa).

Residues 394–422 (PPLPRDDGDGENNVVEVSSSTGGAHPPSD) are disordered.

It belongs to the herpesviridae HEPA family. Associates with the primase and the helicase to form the helicase-primase complex. Interacts with the origin-binding protein. Interacts with the polymerase catalytic subunit.

It is found in the host nucleus. Its function is as follows. Component of the helicase/primase complex. Unwinds the DNA at the replication forks and generates single-stranded DNA for both leading and lagging strand synthesis. The primase synthesizes short RNA primers on the lagging strand that the polymerase presumably elongates using dNTPs. The primase-associated factor has no known catalytic activity in the complex and may serve to facilitate the formation of the replisome by directly interacting with the origin-binding protein and the polymerase. The polypeptide is DNA helicase/primase complex-associated protein (UL102) (Homo sapiens (Human)).